We begin with the raw amino-acid sequence, 233 residues long: Large ribosomal subunit protein uL1 (233 aa).

The protein belongs to the universal ribosomal protein uL1 family. In terms of assembly, part of the 50S ribosomal subunit.

Binds directly to 23S rRNA. The L1 stalk is quite mobile in the ribosome, and is involved in E site tRNA release. Its function is as follows. Protein L1 is also a translational repressor protein, it controls the translation of the L11 operon by binding to its mRNA. The protein is Large ribosomal subunit protein uL1 of Thermotoga maritima (strain ATCC 43589 / DSM 3109 / JCM 10099 / NBRC 100826 / MSB8).